We begin with the raw amino-acid sequence, 66 residues long: Moricin-1 (66 aa).

A signal peptide spans 1-24 (MNILKFFFVFIVAMSLVSCSTAAP).

In terms of tissue distribution, expressed in fat body and to a lesser extent in hemocyte and Malpighian tubules.

It is found in the secreted. Has antibacterial activity against Gram-positive and Gram-negative bacteria. Probably acts by disturbing membrane functions with its amphipathic structure. This chain is Moricin-1 (MOR1), found in Bombyx mori (Silk moth).